A 192-amino-acid chain; its full sequence is A-type ATP synthase subunit E (192 aa).

The protein belongs to the V-ATPase E subunit family. Has multiple subunits with at least A(3), B(3), C, D, E, F, H, I and proteolipid K(x).

It is found in the cell membrane. Functionally, component of the A-type ATP synthase that produces ATP from ADP in the presence of a proton gradient across the membrane. This is A-type ATP synthase subunit E from Methanocorpusculum labreanum (strain ATCC 43576 / DSM 4855 / Z).